The sequence spans 1794 residues: Non-reducing polyketide synthase nscA (1794 aa).

The segment at Asp-19–His-256 is N-terminal acylcarrier protein transacylase domain (SAT). The Ketosynthase family 3 (KS3) domain occupies Ala-389–Asp-822. Residues Asp-428–Gly-440 are compositionally biased toward basic and acidic residues. Positions Asp-428–Thr-448 are disordered. Active-site for beta-ketoacyl synthase activity residues include Cys-562, His-697, and His-740. Positions Thr-927–Glu-1230 are malonyl-CoA:ACP transacylase (MAT) domain. Residues Thr-1314–Pro-1633 form a product template (PT) domain region. The tract at residues His-1318–Ala-1454 is N-terminal hotdog fold. The 311-residue stretch at His-1318–Asp-1628 folds into the PKS/mFAS DH domain. His-1350 serves as the catalytic Proton acceptor; for dehydratase activity. The interval Ala-1482–Asp-1628 is C-terminal hotdog fold. Asp-1539 (proton donor; for dehydratase activity) is an active-site residue. The segment at Ser-1637–Asp-1719 is disordered. A compositionally biased stretch (polar residues) spans Gln-1644 to Lys-1655. A Carrier domain is found at Ser-1717–Cys-1794. O-(pantetheine 4'-phosphoryl)serine is present on Ser-1754.

It depends on pantetheine 4'-phosphate as a cofactor.

It participates in secondary metabolite biosynthesis. In terms of biological role, non-reducing polyketide synthase; part of the gene cluster that mediates the biosynthesis of neosartoricin, a prenylated anthracenone that exhibits T-cell antiproliferative activity, suggestive of a physiological role as an immunosuppressive agent. The non-reducing polyketide synthase nscA probably synthesizes and cyclizes the decaketide backbone. The hydrolase nscB then mediates the product release through hydrolysis followed by spontaneous decarboxylation. The prenyltransferase nscD catalyzes the addition of the dimethylallyl group to the aromatic C5. The FAD-dependent monooxygenase nscC is then responsible for the stereospecific hydroxylation at C2. There is no gene encoding O-acetyltransferase in the nsc gene cluster; thus, the last step of 2-O-acetylation leading to neosartoricin may be catalyzed by an unidentified O-acetyltransferase. The polypeptide is Non-reducing polyketide synthase nscA (Aspergillus fumigatus (strain ATCC MYA-4609 / CBS 101355 / FGSC A1100 / Af293) (Neosartorya fumigata)).